Reading from the N-terminus, the 274-residue chain is 2,3,4,5-tetrahydropyridine-2,6-dicarboxylate N-succinyltransferase (274 aa).

2 residues coordinate substrate: R104 and D141.

Belongs to the transferase hexapeptide repeat family. In terms of assembly, homotrimer.

It is found in the cytoplasm. It carries out the reaction (S)-2,3,4,5-tetrahydrodipicolinate + succinyl-CoA + H2O = (S)-2-succinylamino-6-oxoheptanedioate + CoA. It participates in amino-acid biosynthesis; L-lysine biosynthesis via DAP pathway; LL-2,6-diaminopimelate from (S)-tetrahydrodipicolinate (succinylase route): step 1/3. The polypeptide is 2,3,4,5-tetrahydropyridine-2,6-dicarboxylate N-succinyltransferase (Shewanella halifaxensis (strain HAW-EB4)).